A 655-amino-acid polypeptide reads, in one-letter code: p-hydroxybenzoic acid efflux pump subunit AaeB (655 aa).

The Periplasmic segment spans residues 1 to 12; the sequence is MGIFSIANQHIR. Residues 13 to 33 form a helical membrane-spanning segment; that stretch reads FAVKLATAIVLALFVGFHFQL. At 34–37 the chain is on the cytoplasmic side; the sequence is ETPR. The helical transmembrane segment at 38 to 58 threads the bilayer; that stretch reads WAVLTAAIVAAGTAFAAGGEP. At 59 to 68 the chain is on the periplasmic side; it reads YSGAIRYRGF. A helical transmembrane segment spans residues 69 to 89; that stretch reads LRIIGTFIGCIAGLVIIIAMI. Over 90–92 the chain is Cytoplasmic; it reads RAP. Residues 93 to 113 traverse the membrane as a helical segment; that stretch reads LLMILVCCIWAGFCTWISSLV. The Periplasmic segment spans residues 114-120; that stretch reads RIENSYA. The chain crosses the membrane as a helical span at residues 121 to 141; that stretch reads WGLAGYTALIIVITIQPEPLL. The Cytoplasmic segment spans residues 142-151; the sequence is TPQFAVERCS. A helical transmembrane segment spans residues 152-172; that stretch reads EIVIGIVCAIMADLLFSPRSI. Topologically, residues 173–369 are periplasmic; the sequence is KQEVDRELES…RTTLSCILGT (197 aa). A helical membrane pass occupies residues 370 to 390; it reads LFWLWTGWTSGSGAMVMIAVV. The Cytoplasmic portion of the chain corresponds to 391–406; the sequence is TSLAMRLPNPRMVAID. Residues 407–427 traverse the membrane as a helical segment; that stretch reads FIYGTLAALPLGLLYFLVIIP. At 428-430 the chain is on the periplasmic side; sequence NTQ. A helical transmembrane segment spans residues 431–451; it reads QSMLLLCISLAVLGFFLGIEV. Residues 452–458 are Cytoplasmic-facing; the sequence is QKRRLGS. Residues 459-479 traverse the membrane as a helical segment; it reads MGALASTINIIVLDNPMTFHF. Topologically, residues 480–481 are periplasmic; it reads SQ. Residues 482-502 form a helical membrane-spanning segment; the sequence is FLDSALGQIVGCVLAFTVILL. Residues 503–655 are Cytoplasmic-facing; it reads VRDKSRDRTG…HKYQHALTDS (153 aa).

Belongs to the aromatic acid exporter ArAE (TC 2.A.85) family.

It is found in the cell inner membrane. Forms an efflux pump with AaeA. Could function as a metabolic relief valve, allowing to eliminate certain compounds when they accumulate to high levels in the cell. Substrates are p-hydroxybenzoic acid (pHBA), 6-hydroxy-2-naphthoic and 2-hydroxycinnamate. This Escherichia coli (strain K12) protein is p-hydroxybenzoic acid efflux pump subunit AaeB.